Consider the following 141-residue polypeptide: Hemoglobin subunit alpha-A (141 aa).

One can recognise a Globin domain in the interval Val-1–Arg-141. Position 58 (His-58) interacts with O2. His-87 contacts heme b.

Belongs to the globin family. In terms of assembly, heterotetramer of two alpha chains and two beta chains. As to expression, red blood cells.

Functionally, involved in oxygen transport from the lung to the various peripheral tissues. This is Hemoglobin subunit alpha-A (HBAA) from Phasianus colchicus colchicus (Black-necked pheasant).